The chain runs to 183 residues: Ribosome-binding factor A (183 aa).

Residues 132–183 (PAGEADPYRDNGSVAQSPAPGGLGIRTSDGPEAVEAPLTCGGDTGDDDRPKE) are disordered.

The protein belongs to the RbfA family. In terms of assembly, monomer. Binds 30S ribosomal subunits, but not 50S ribosomal subunits or 70S ribosomes.

It is found in the cytoplasm. In terms of biological role, one of several proteins that assist in the late maturation steps of the functional core of the 30S ribosomal subunit. Associates with free 30S ribosomal subunits (but not with 30S subunits that are part of 70S ribosomes or polysomes). Required for efficient processing of 16S rRNA. May interact with the 5'-terminal helix region of 16S rRNA. The chain is Ribosome-binding factor A from Mycobacterium tuberculosis (strain ATCC 25177 / H37Ra).